We begin with the raw amino-acid sequence, 741 residues long: Cellulose 1,4-beta-cellobiosidase (reducing end) CelS (741 aa).

A signal peptide spans 1–27 (MVKSRKISILLAVAMLVSIMIPTTAFA). E76 lines the substrate pocket. E87 serves as the catalytic Proton donor. Substrate-binding positions include T140, N204, D241, Q247, and 251 to 252 (TN). The Nucleophile role is filled by D255. Substrate is bound by residues 301–302 (KY), 326–327 (WY), Y421, D520, and 645–646 (WH). The Dockerin domain maps to 673–739 (STKLYGDVND…ILKEIDTLPY (67 aa)). Residues D679, N681, D683, G684, K685, D690, D711, L712, N713, D715, R717, and D722 each coordinate Ca(2+).

The protein belongs to the glycosyl hydrolase 48 (cellulase L) family.

The protein resides in the secreted. It carries out the reaction Hydrolysis of (1-&gt;4)-beta-D-glucosidic linkages in cellulose and similar substrates, releasing cellobiose from the reducing ends of the chains.. With respect to regulation, inhibited by cellobiose and lactose, but not by glucose. In terms of biological role, this enzyme catalyzes the exohydrolysis of 1,4-beta-glucosidic linkages in cellulose with a preference for amorphous or crystalline cellulose over carboxymethyl cellulose. This Acetivibrio thermocellus (strain ATCC 27405 / DSM 1237 / JCM 9322 / NBRC 103400 / NCIMB 10682 / NRRL B-4536 / VPI 7372) (Clostridium thermocellum) protein is Cellulose 1,4-beta-cellobiosidase (reducing end) CelS (celS).